Here is a 203-residue protein sequence, read N- to C-terminus: ATP-dependent Clp protease proteolytic subunit (203 aa).

Serine 101 functions as the Nucleophile in the catalytic mechanism. Histidine 126 is an active-site residue.

The protein belongs to the peptidase S14 family. As to quaternary structure, component of the chloroplastic Clp protease core complex.

It localises to the plastid. The protein localises to the chloroplast stroma. The enzyme catalyses Hydrolysis of proteins to small peptides in the presence of ATP and magnesium. alpha-casein is the usual test substrate. In the absence of ATP, only oligopeptides shorter than five residues are hydrolyzed (such as succinyl-Leu-Tyr-|-NHMec, and Leu-Tyr-Leu-|-Tyr-Trp, in which cleavage of the -Tyr-|-Leu- and -Tyr-|-Trp bonds also occurs).. Its function is as follows. Cleaves peptides in various proteins in a process that requires ATP hydrolysis. Has a chymotrypsin-like activity. Plays a major role in the degradation of misfolded proteins. The chain is ATP-dependent Clp protease proteolytic subunit from Marchantia polymorpha (Common liverwort).